The sequence spans 546 residues: Tyrosine-protein kinase yes (546 aa).

Over residues 1 to 18 (MGCVKSKEDKGPTQKYRP) the composition is skewed to basic and acidic residues. The segment at 1–58 (MGCVKSKEDKGPTQKYRPDPTNPTPGSHMGLYGPDPTQMGQSPALKGPTNNYNSRSSG) is disordered. Gly2 carries N-myristoyl glycine lipidation. A lipid anchor (S-palmitoyl cysteine; in membrane form) is attached at Cys3. A compositionally biased stretch (polar residues) spans 48-58 (PTNNYNSRSSG). Residues 94–155 (GGVTFFVALY…PSNYVAPADS (62 aa)) form the SH3 domain. The 98-residue stretch at 161–258 (WYFGKMGRKD…GLCYRLTTVC (98 aa)) folds into the SH2 domain. Positions 280–533 (LRLELKLGQG…YIQSFLEDYF (254 aa)) constitute a Protein kinase domain. ATP-binding positions include 286-294 (LGQGCFGEV) and Lys308. Residue Asp399 is the Proton acceptor of the active site. Residue Tyr429 is modified to Phosphotyrosine; by autocatalysis. The residue at position 540 (Tyr540) is a Phosphotyrosine; by CSK.

It belongs to the protein kinase superfamily. Tyr protein kinase family. SRC subfamily. Autophosphorylation at Tyr-429 maintains enzyme activity. In terms of processing, palmitoylation at Cys-3 promotes membrane localization. In terms of tissue distribution, widely expressed.

The protein localises to the cell membrane. It localises to the cytoplasm. Its subcellular location is the cytoskeleton. The protein resides in the microtubule organizing center. It is found in the centrosome. The protein localises to the cytosol. It localises to the cell junction. The enzyme catalyses L-tyrosyl-[protein] + ATP = O-phospho-L-tyrosyl-[protein] + ADP + H(+). Its function is as follows. Non-receptor protein tyrosine kinase that is involved in the regulation of cell growth and survival, apoptosis, cell-cell adhesion, cytoskeleton remodeling, differentiation, G2/M progression and cytokinesis. Required for convergent extension cell movements during gastrulation, acting with fyna via rhoa. May be required for epiboly to occur, possibly through its effects in calcium signaling. During embryonic development, phosphorylates ptk2.1/fak. The protein is Tyrosine-protein kinase yes (yes1) of Danio rerio (Zebrafish).